The sequence spans 128 residues: Sulfurtransferase TusD (128 aa).

Residue C78 is the Cysteine persulfide intermediate of the active site.

Belongs to the DsrE/TusD family. As to quaternary structure, heterohexamer, formed by a dimer of trimers. The hexameric TusBCD complex contains 2 copies each of TusB, TusC and TusD. The TusBCD complex interacts with TusE.

It is found in the cytoplasm. Its function is as follows. Part of a sulfur-relay system required for 2-thiolation of 5-methylaminomethyl-2-thiouridine (mnm(5)s(2)U) at tRNA wobble positions. Accepts sulfur from TusA and transfers it in turn to TusE. This chain is Sulfurtransferase TusD, found in Escherichia coli O157:H7.